A 373-amino-acid polypeptide reads, in one-letter code: Eukaryotic translation initiation factor 3 subunit M (373 aa).

Residue S2 is modified to N-acetylserine. 2 positions are modified to phosphoserine: S2 and S152. One can recognise a PCI domain in the interval 180–338 (AASKVMVELL…RKVVVSHSTH (159 aa)). Residue K253 is modified to N6-acetyllysine. The residue at position 366 (S366) is a Phosphoserine.

The protein belongs to the eIF-3 subunit M family. As to quaternary structure, component of the eukaryotic translation initiation factor 3 (eIF-3) complex, which is composed of 13 subunits: EIF3A, EIF3B, EIF3C, EIF3D, EIF3E, EIF3F, EIF3G, EIF3H, EIF3I, EIF3J, EIF3K, EIF3L and EIF3M. The eIF-3 complex appears to include 3 stable modules: module A is composed of EIF3A, EIF3B, EIF3G and EIF3I; module B is composed of EIF3F, EIF3H, and EIF3M; and module C is composed of EIF3C, EIF3D, EIF3E, EIF3K and EIF3L. EIF3C of module C binds EIF3B of module A and EIF3H of module B, thereby linking the three modules. EIF3J is a labile subunit that binds to the eIF-3 complex via EIF3B. The eIF-3 complex interacts with RPS6KB1 under conditions of nutrient depletion. Mitogenic stimulation leads to binding and activation of a complex composed of MTOR and RPTOR, leading to phosphorylation and release of RPS6KB1 and binding of EIF4B to eIF-3.

The protein resides in the cytoplasm. Functionally, component of the eukaryotic translation initiation factor 3 (eIF-3) complex, which is required for several steps in the initiation of protein synthesis. The eIF-3 complex associates with the 40S ribosome and facilitates the recruitment of eIF-1, eIF-1A, eIF-2:GTP:methionyl-tRNAi and eIF-5 to form the 43S pre-initiation complex (43S PIC). The eIF-3 complex stimulates mRNA recruitment to the 43S PIC and scanning of the mRNA for AUG recognition. The eIF-3 complex is also required for disassembly and recycling of post-termination ribosomal complexes and subsequently prevents premature joining of the 40S and 60S ribosomal subunits prior to initiation. The eIF-3 complex specifically targets and initiates translation of a subset of mRNAs involved in cell proliferation, including cell cycling, differentiation and apoptosis, and uses different modes of RNA stem-loop binding to exert either translational activation or repression. The protein is Eukaryotic translation initiation factor 3 subunit M of Bos taurus (Bovine).